A 322-amino-acid chain; its full sequence is Phospho-N-acetylmuramoyl-pentapeptide-transferase (322 aa).

10 helical membrane passes run isoleucine 9–methionine 29, threonine 54–tryptophan 74, valine 82–isoleucine 102, isoleucine 122–tyrosine 142, phenylalanine 145–glycine 165, leucine 176–phenylalanine 196, asparagine 200–phenylalanine 220, isoleucine 227–methionine 247, leucine 255–phenylalanine 275, and valine 302–glycine 322.

It belongs to the glycosyltransferase 4 family. MraY subfamily. Requires Mg(2+) as cofactor.

The protein resides in the cell membrane. The enzyme catalyses UDP-N-acetyl-alpha-D-muramoyl-L-alanyl-gamma-D-glutamyl-L-lysyl-D-alanyl-D-alanine + di-trans,octa-cis-undecaprenyl phosphate = Mur2Ac(oyl-L-Ala-gamma-D-Glu-L-Lys-D-Ala-D-Ala)-di-trans,octa-cis-undecaprenyl diphosphate + UMP. It functions in the pathway cell wall biogenesis; peptidoglycan biosynthesis. In terms of biological role, catalyzes the initial step of the lipid cycle reactions in the biosynthesis of the cell wall peptidoglycan: transfers peptidoglycan precursor phospho-MurNAc-pentapeptide from UDP-MurNAc-pentapeptide onto the lipid carrier undecaprenyl phosphate, yielding undecaprenyl-pyrophosphoryl-MurNAc-pentapeptide, known as lipid I. The polypeptide is Phospho-N-acetylmuramoyl-pentapeptide-transferase (Lactobacillus acidophilus (strain ATCC 700396 / NCK56 / N2 / NCFM)).